The chain runs to 382 residues: MGDWSALGKLLDKVQAYSTAGGKVWLSVLFIFRILLLGTAVESAWGDEQSAFRCNTQQPGCENVCYDKSFPISHVRFWVLQIIFVSVPTLLYLAHVFYVMRKEEKLNKKEEELKVAQTDGANVDMHLKQIEIKKFKYGIEEHGKVKMRGGLLRTYIISILFKSVFEVAFLLIQWYIYGFSLSAVYTCKRDPCPHQVDCFLSRPTEKTIFIIFMLVVSLVSLALNIIELFYVFFKGIKDRVKGKSDLYHATTGPLSPSKDRGSPTYAYFNGCSSPTAPLSPMSPPGYKLVTGDRNNSSCRNYNKQASEQNWANYSAEQNRMGQAGSTISNSHAQPFDFPDDAQNSKKLAAGHELQPLAIVDQRPSSRASSRASSRPRPDDLEI.

At 2-23 (GDWSALGKLLDKVQAYSTAGGK) the chain is on the cytoplasmic side. Ser5 carries the post-translational modification Phosphoserine. Residues 24 to 44 (VWLSVLFIFRILLLGTAVESA) form a helical membrane-spanning segment. Over 45–76 (WGDEQSAFRCNTQQPGCENVCYDKSFPISHVR) the chain is Extracellular. Disulfide bonds link Cys54-Cys192 and Cys187-Cys198. A helical transmembrane segment spans residues 77 to 97 (FWVLQIIFVSVPTLLYLAHVF). The Cytoplasmic portion of the chain corresponds to 98–155 (YVMRKEEKLNKKEEELKVAQTDGANVDMHLKQIEIKKFKYGIEEHGKVKMRGGLLRTY). Lys144 participates in a covalent cross-link: Glycyl lysine isopeptide (Lys-Gly) (interchain with G-Cter in SUMO). The chain crosses the membrane as a helical span at residues 156 to 176 (IISILFKSVFEVAFLLIQWYI). The Extracellular portion of the chain corresponds to 177–207 (YGFSLSAVYTCKRDPCPHQVDCFLSRPTEKT). Residues 208–228 (IFIIFMLVVSLVSLALNIIEL) traverse the membrane as a helical segment. Over 229–382 (FYVFFKGIKD…SRPRPDDLEI (154 aa)) the chain is Cytoplasmic. Lys237 participates in a covalent cross-link: Glycyl lysine isopeptide (Lys-Gly) (interchain with G-Cter in SUMO). An interaction with NOV region spans residues 244–382 (SDLYHATTGP…SRPRPDDLEI (139 aa)). Phosphotyrosine is present on Tyr247. 3 positions are modified to phosphoserine: Ser255, Ser257, and Ser262. The interaction with UBQLN4 stretch occupies residues 264–382 (TYAYFNGCSS…SRPRPDDLEI (119 aa)). Residue Cys271 is modified to S-nitrosocysteine. Thr275 is modified (phosphothreonine). Phosphoserine is present on residues Ser306 and Ser314. The span at 317 to 332 (QNRMGQAGSTISNSHA) shows a compositional bias: polar residues. The tract at residues 317–382 (QNRMGQAGST…SRPRPDDLEI (66 aa)) is disordered. Ser325 carries the phosphoserine; by CK1 modification. Residue Thr326 is modified to Phosphothreonine. Ser328 and Ser330 each carry phosphoserine; by CK1. Residues Ser344 and Ser365 each carry the phosphoserine modification. The segment covering 362–374 (RPSSRASSRASSR) has biased composition (low complexity). Ser368 carries the phosphoserine; by PKC/PRKCG and PKC/PRKCD modification. 2 positions are modified to phosphoserine: Ser369 and Ser373.

Belongs to the connexin family. Alpha-type (group II) subfamily. A connexon is composed of a hexamer of connexins. Interacts with SGSM3. Interacts with RIC1/CIP150. Interacts with CNST and CSNK1D. Interacts (via C-terminus) with TJP1. Interacts (via C-terminus) with SRC (via SH3 domain). Interacts (not ubiquitinated) with UBQLN4 (via UBA domain). Interacts with NOV. Interacts with TMEM65. Interacts with ANK3/ANKG and PKP2. Phosphorylation at Ser-325, Ser-328 and Ser-330 by CK1 modulates gap junction assembly. Phosphorylated at Ser-368 by PRKCG; phosphorylation induces disassembly of gap junction plaques and inhibition of gap junction activity. Phosphorylation at Ser-368 by PRKCD triggers its internalization into small vesicles leading to proteasome-mediated degradation. Post-translationally, sumoylated with SUMO1, SUMO2 and SUMO3, which may regulate the level of functional Cx43 gap junctions at the plasma membrane. May be desumoylated by SENP1 or SENP2. In terms of processing, S-nitrosylation at Cys-271 is enriched at the muscle endothelial gap junction in arteries, it augments channel permeability and may regulate of smooth muscle cell to endothelial cell communication. Acetylated in the developing cortex; leading to delocalization from the cell membrane.

Its subcellular location is the cell membrane. The protein localises to the cell junction. The protein resides in the gap junction. It is found in the endoplasmic reticulum. Gap junction protein that acts as a regulator of bladder capacity. A gap junction consists of a cluster of closely packed pairs of transmembrane channels, the connexons, through which materials of low MW diffuse from one cell to a neighboring cell. May play a critical role in the physiology of hearing by participating in the recycling of potassium to the cochlear endolymph. Negative regulator of bladder functional capacity: acts by enhancing intercellular electrical and chemical transmission, thus sensitizing bladder muscles to cholinergic neural stimuli and causing them to contract. May play a role in cell growth inhibition through the regulation of NOV expression and localization. Plays an essential role in gap junction communication in the ventricles. The sequence is that of Gap junction alpha-1 protein (GJA1) from Erinaceus europaeus (Western European hedgehog).